The following is a 340-amino-acid chain: GTPase Obg (340 aa).

The region spanning 1 to 159 is the Obg domain; the sequence is MRFIDKAKIH…RWIELELKLI (159 aa). Residues 160-331 enclose the OBG-type G domain; sequence ADIGIIGFPN…LIKLIAEVYE (172 aa). Residues 166–173, 191–195, 213–216, 283–286, and 312–314 each bind GTP; these read GFPNAGKS, FTTLT, DIPG, NKID, and SLV. Residues Ser173 and Thr193 each coordinate Mg(2+).

Belongs to the TRAFAC class OBG-HflX-like GTPase superfamily. OBG GTPase family. Monomer. It depends on Mg(2+) as a cofactor.

Its subcellular location is the cytoplasm. In terms of biological role, an essential GTPase which binds GTP, GDP and possibly (p)ppGpp with moderate affinity, with high nucleotide exchange rates and a fairly low GTP hydrolysis rate. Plays a role in control of the cell cycle, stress response, ribosome biogenesis and in those bacteria that undergo differentiation, in morphogenesis control. This chain is GTPase Obg, found in Persephonella marina (strain DSM 14350 / EX-H1).